Consider the following 553-residue polypeptide: Phospholipase-B 81 (553 aa).

An N-terminal signal peptide occupies residues 1-35; sequence MVRFGSAASSDNRRRRCWSWYWGGLLLLWAVAETR. N-linked (GlcNAc...) asparagine glycosylation is found at asparagine 69, asparagine 313, asparagine 416, and asparagine 531.

It belongs to the phospholipase B-like family. Expressed by the venom gland.

The protein localises to the secreted. Its function is as follows. May cause hemolysis. This Drysdalia coronoides (White-lipped snake) protein is Phospholipase-B 81.